A 346-amino-acid polypeptide reads, in one-letter code: Peroxidase 19 (346 aa).

Residues 1–31 (MHVISLSLSSIFFFLFLTSTILISPVQPTTS) form the signal peptide. Cystine bridges form between Cys-51/Cys-134, Cys-84/Cys-89, Cys-140/Cys-342, and Cys-219/Cys-251. His-82 functions as the Proton acceptor in the catalytic mechanism. Residues Asp-83, Val-86, Gly-88, Asp-90, and Ser-92 each contribute to the Ca(2+) site. Position 182 (Pro-182) interacts with substrate. Asn-185 is a glycosylation site (N-linked (GlcNAc...) asparagine). His-212 provides a ligand contact to heme b. Ca(2+) is bound at residue Thr-213. Positions 265, 268, and 273 each coordinate Ca(2+).

It belongs to the peroxidase family. Classical plant (class III) peroxidase subfamily. The cofactor is heme b. It depends on Ca(2+) as a cofactor.

It localises to the secreted. The enzyme catalyses 2 a phenolic donor + H2O2 = 2 a phenolic radical donor + 2 H2O. Removal of H(2)O(2), oxidation of toxic reductants, biosynthesis and degradation of lignin, suberization, auxin catabolism, response to environmental stresses such as wounding, pathogen attack and oxidative stress. These functions might be dependent on each isozyme/isoform in each plant tissue. This is Peroxidase 19 (PER19) from Arabidopsis thaliana (Mouse-ear cress).